We begin with the raw amino-acid sequence, 624 residues long: Kelch-like ECH-associated protein 1 (624 aa).

Positions 1–27 (MQPEPRPSGAGAHTQFLPLRSQRPEGA) are disordered. Cysteine 38 is modified (S-(2-succinyl)cysteine). The BTB domain occupies 77–149 (CDVTLQVKYE…AYTASISMGE (73 aa)). Arginine 135 participates in a covalent cross-link: N5-[4-(S-L-cysteinyl)-5-methyl-1H-imidazol-2-yl]-L-ornithine (Arg-Cys) (interchain with C-151 in KEAP1). S-(2-succinyl)cysteine occurs at positions 151 and 241. S-(2,3-dicarboxypropyl)cysteine; alternate is present on cysteine 151. The residue at position 151 (cysteine 151) is an S-nitrosocysteine; alternate. Cysteine 151 participates in a covalent cross-link: N5-[4-(S-L-cysteinyl)-5-methyl-1H-imidazol-2-yl]-L-ornithine (Cys-Arg) (interchain with R-135 in KEAP1). The 103-residue stretch at 184-286 (AIGIANFAEQ…TPHFLQMQLQ (103 aa)) folds into the BACK domain. Cysteine 257 and cysteine 273 each carry S-(2,3-dicarboxypropyl)cysteine. Cysteine 288 and cysteine 319 each carry S-(2-succinyl)cysteine. Cysteine 288 carries the post-translational modification S-(2,3-dicarboxypropyl)cysteine; alternate. 6 Kelch repeats span residues 327–372 (LIYT…VVGG), 373–423 (LLYA…VIDG), 424–470 (HIYA…VLNR), 471–517 (LLYA…VLHN), 519–564 (IYAA…VHQG), and 565–611 (RIYV…VTME). Cysteine 434 is subject to S-cGMP-cysteine. Cysteine 613 is modified (S-(2-succinyl)cysteine).

It belongs to the KEAP1 family. Component of the BCR(KEAP1) E3 ubiquitin ligase complex, at least composed of 2 molecules of CUL3, 2 molecules of KEAP1, and RBX1. Interacts with NFE2L2/NRF2; the interaction is direct. Forms a ternary complex with NFE2L2/NRF2 and PGAM5. Interacts with (phosphorylated) SQSTM1/p62; the interaction is direct and inactivates the BCR(KEAP1) complex by sequestering it in inclusion bodies, promoting its degradation. Interacts with NFE2L1. Interacts with BPTF and PTMA. Interacts with MAP1LC3B. Interacts indirectly with ENC1. Interacts with SESN1 and SESN2. Interacts with HSP90AA1 and HSP90AB1. Interacts with PGCKA1; this interaction prevents the ubiquitination of KEAP1 by TRIM25, thus protecting KEAP1 protein from degradation. Post-translationally, non-enzymatic covalent modifications of reactive cysteines by electrophile metabolites inactivate the BCR(KEAP1) complex. Accumulation of fumarate promotes the formation of cysteine S-succination (S-(2-succinyl)cysteine), leading to inactivate the BCR(KEAP1) complex and promote NFE2L2/NRF2 nuclear accumulation and activation. Nitric oxide-dependent 8-Nitro-cGMP formation promotes cysteine guanylation (S-cGMP-cysteine), leading to NFE2L2/NRF2 nuclear accumulation and activation. Itaconate, an anti-inflammatory metabolite generated in response to lipopolysaccharide, alkylates cysteines, activating NFE2L2/NRF2. Methylglyoxal, a reactive metabolite that accumulates when the glycolytic enzyme PGK1 is inhibited, promotes formation of a methylimidazole cross-link between proximal Cys-151 and Arg-135 on another KEAP1 molecule, resulting in an inactive dimer that inactivates the BCR(KEAP1) complex. Degraded via a proteasomal-independent process during selective autophagy: interaction with phosphorylated SQSTM1/p62 sequesters KEAP1 in inclusion bodies, leading to its degradation. In terms of processing, auto-ubiquitinated by the BCR(KEAP1) complex. Quinone-induced oxidative stress, but not sulforaphane, increases its ubiquitination. Ubiquitination and subsequent degradation is most pronounced following prolonged exposure of cells to oxidative stress, particularly in glutathione-deficient cells that are highly susceptible to oxidative stress. Deubiquitinated by USP25; leading to stabilization. Ubiquitinated by TRIM25; leading to degradation upon ER stress.

The protein resides in the cytoplasm. It localises to the nucleus. It participates in protein modification; protein ubiquitination. With respect to regulation, ubiquitin ligase activity of the BCR(KEAP1) complex is inhibited by oxidative stress and electrophile metabolites such as sulforaphane. Electrophile metabolites react with reactive cysteine residues in KEAP1 and trigger non-enzymatic covalent modifications of these cysteine residues, leading to inactivate the ubiquitin ligase activity of the BCR(KEAP1) complex. Selective autophagy also inactivates the BCR(KEAP1) complex via interaction between KEAP1 and SQSTM1/p62, which sequesters the complex in inclusion bodies and promotes its degradation. Functionally, substrate-specific adapter of a BCR (BTB-CUL3-RBX1) E3 ubiquitin ligase complex that regulates the response to oxidative stress by targeting NFE2L2/NRF2 for ubiquitination. KEAP1 acts as a key sensor of oxidative and electrophilic stress: in normal conditions, the BCR(KEAP1) complex mediates ubiquitination and degradation of NFE2L2/NRF2, a transcription factor regulating expression of many cytoprotective genes. In response to oxidative stress, different electrophile metabolites trigger non-enzymatic covalent modifications of highly reactive cysteine residues in KEAP1, leading to inactivate the ubiquitin ligase activity of the BCR(KEAP1) complex, promoting NFE2L2/NRF2 nuclear accumulation and expression of phase II detoxifying enzymes. In response to selective autophagy, KEAP1 is sequestered in inclusion bodies following its interaction with SQSTM1/p62, leading to inactivation of the BCR(KEAP1) complex and activation of NFE2L2/NRF2. The BCR(KEAP1) complex also mediates ubiquitination of SQSTM1/p62, increasing SQSTM1/p62 sequestering activity and degradation. The BCR(KEAP1) complex also targets BPTF and PGAM5 for ubiquitination and degradation by the proteasome. The protein is Kelch-like ECH-associated protein 1 of Sus scrofa (Pig).